Reading from the N-terminus, the 607-residue chain is Elongation factor 4 (607 aa).

The region spanning 11 to 193 (ENIRNFSIIA…KIVDVVPAPD (183 aa)) is the tr-type G domain. Residues 23–28 (DHGKST) and 140–143 (NKID) contribute to the GTP site.

It belongs to the TRAFAC class translation factor GTPase superfamily. Classic translation factor GTPase family. LepA subfamily.

It localises to the cell membrane. The catalysed reaction is GTP + H2O = GDP + phosphate + H(+). In terms of biological role, required for accurate and efficient protein synthesis under certain stress conditions. May act as a fidelity factor of the translation reaction, by catalyzing a one-codon backward translocation of tRNAs on improperly translocated ribosomes. Back-translocation proceeds from a post-translocation (POST) complex to a pre-translocation (PRE) complex, thus giving elongation factor G a second chance to translocate the tRNAs correctly. Binds to ribosomes in a GTP-dependent manner. The sequence is that of Elongation factor 4 from Staphylococcus epidermidis (strain ATCC 35984 / DSM 28319 / BCRC 17069 / CCUG 31568 / BM 3577 / RP62A).